A 142-amino-acid chain; its full sequence is Nucleoside diphosphate kinase (142 aa).

ATP contacts are provided by Lys11, Phe59, Arg87, Thr93, Arg104, and Asn114. The active-site Pros-phosphohistidine intermediate is the His117.

Belongs to the NDK family. Homotetramer. Mg(2+) is required as a cofactor.

It localises to the cytoplasm. It catalyses the reaction a 2'-deoxyribonucleoside 5'-diphosphate + ATP = a 2'-deoxyribonucleoside 5'-triphosphate + ADP. The catalysed reaction is a ribonucleoside 5'-diphosphate + ATP = a ribonucleoside 5'-triphosphate + ADP. Major role in the synthesis of nucleoside triphosphates other than ATP. The ATP gamma phosphate is transferred to the NDP beta phosphate via a ping-pong mechanism, using a phosphorylated active-site intermediate. The chain is Nucleoside diphosphate kinase from Thiobacillus denitrificans (strain ATCC 25259 / T1).